The sequence spans 759 residues: uncharacterized protein (759 aa).

2 disordered regions span residues 1 to 31 (MDGNRRVRFNTDRRPYLSPLQTSFPSSTSFQ) and 188 to 211 (NDEGEDVKDNEQDDNIDESDPFAN). Over residues 17–31 (LSPLQTSFPSSTSFQ) the composition is skewed to low complexity. Acidic residues predominate over residues 189-207 (DEGEDVKDNEQDDNIDESD). 10 consecutive transmembrane segments (helical) span residues 434–454 (YFRTWILVVFYGFASATILPM), 456–476 (FQGGWIDLPIAFILGCLVGIL), 486–505 (MYNSLFEVTGSIITSFLSRA), 517–537 (FCFSALAEGAIVLILPGYIVL), 555–575 (MFYAIIYSLFLSFGISIGAAL), 597–617 (DKWKILFVPLFTLCLLIVNQA), 620–640 (SQWPVSIFISCAGYVVNYFTA), 643–663 (FGSNPIANAIGSFAIGCLGNI), 670–690 (GVAFAAVLPAIFVQVPSGLAA), and 726–746 (LVMVQIAIGISVGLFASALVV).

Belongs to the ThrE exporter (TC 2.A.79) family.

Its subcellular location is the endoplasmic reticulum membrane. This is an uncharacterized protein from Schizosaccharomyces pombe (strain 972 / ATCC 24843) (Fission yeast).